We begin with the raw amino-acid sequence, 249 residues long: ATP synthase subunit a, chloroplastic (249 aa).

The next 5 helical transmembrane spans lie at 38–58, 97–117, 136–156, 201–221, and 222–242; these read AQVL…AVLA, VPFI…GALL, INTT…AGLH, LVVA…MMFL, and GLFT…AYIG.

Belongs to the ATPase A chain family. As to quaternary structure, F-type ATPases have 2 components, CF(1) - the catalytic core - and CF(0) - the membrane proton channel. CF(1) has five subunits: alpha(3), beta(3), gamma(1), delta(1), epsilon(1). CF(0) has four main subunits: a, b, b' and c.

It is found in the plastid. The protein resides in the chloroplast thylakoid membrane. Functionally, key component of the proton channel; it plays a direct role in the translocation of protons across the membrane. The protein is ATP synthase subunit a, chloroplastic of Physcomitrium patens (Spreading-leaved earth moss).